The primary structure comprises 191 residues: Surfactant protein C (191 aa).

The propeptide occupies 1 to 23 (MDVGSKEVLMESPPDYSAAPRGR). 2 S-palmitoyl cysteine lipidation sites follow: Cys-28 and Cys-29. The propeptide occupies 59-191 (HMSQKHTEMV…LCGEVPLYYI (133 aa)). The BRICHOS domain maps to 94–191 (FSFGSTGLVV…LCGEVPLYYI (98 aa)). The cysteines at positions 121 and 183 are disulfide-linked.

It localises to the secreted. The protein localises to the extracellular space. Its subcellular location is the surface film. Functionally, pulmonary surfactant associated proteins promote alveolar stability by lowering the surface tension at the air-liquid interface in the peripheral air spaces. The polypeptide is Surfactant protein C (SFTPC) (Macaca mulatta (Rhesus macaque)).